Reading from the N-terminus, the 528-residue chain is MPANKIDALFVNFLGNSPKWYKLAILSFLVINPLIFFFINPFVAGWVLVLEFIFTLAMALKCYPLQPGGLLAIQAVAIGMTSPSQVLHEIQANLEVLLLLIFMVAGIYFMKQLLLFVFTKMITKVRSKTYLSLLFCVAAAFLSAFLDALTVIAVIIAVGIGFYSIYHKVASGKDFSSDHDHTSESHDQLNADDLESFRGFLRNLLMHAGVGTALGGVCTMVGEPQNLIIAAQAHWQFGEFFIRMSPVTIPVLLSGLLTCVVVEKLKWFTYGVQLPENVHKILSDYDAYEDTHRSDRDKVKLIIQALVGVWLVAGLALHLASVGLIGLSVIILTTAFNGITDEHSLGKAFEEALPFTALLAVFFAIVGVIIDQRLFAPVIQWALTFEGNAQLVVFFIANGVLSMVSDNVFVGTVYINEVKSALLSGQITRDQFDLLAVAINTGTNLPSVATPNGQAAFLFLLTSALAPLIRLSYGRMVIMALPYTLVLSIVGIVTIESGFLVEMTQYFYDNNIIMHHSAKELTESVVGH.

Transmembrane regions (helical) follow at residues 11–31, 67–87, 98–118, 140–160, 240–260, 311–331, 350–370, 391–411, 449–469, and 476–496; these read VNFL…FLVI, PGGL…SQVL, LLLI…LFVF, AFLS…AVGI, FFIR…LTCV, LVAG…SVII, EEAL…GVII, LVVF…VFVG, ATPN…APLI, and MVIM…VTIE.

It belongs to the NhaB Na(+)/H(+) (TC 2.A.34) antiporter family.

It is found in the cell inner membrane. It carries out the reaction 2 Na(+)(in) + 3 H(+)(out) = 2 Na(+)(out) + 3 H(+)(in). Functionally, na(+)/H(+) antiporter that extrudes sodium in exchange for external protons. The protein is Na(+)/H(+) antiporter NhaB of Shewanella denitrificans (strain OS217 / ATCC BAA-1090 / DSM 15013).